The primary structure comprises 117 residues: Protein Wnt-6 (117 aa).

Residue serine 1 is the site of O-palmitoleoyl serine; by PORCN attachment. Residues cysteine 83 and cysteine 98 are joined by a disulfide bond. A glycan (N-linked (GlcNAc...) asparagine) is linked at asparagine 84.

The protein belongs to the Wnt family. Palmitoleoylation is required for efficient binding to frizzled receptors. Depalmitoleoylation leads to Wnt signaling pathway inhibition.

The protein localises to the secreted. The protein resides in the extracellular space. It localises to the extracellular matrix. In terms of biological role, ligand for members of the frizzled family of seven transmembrane receptors. Probable developmental protein. May be a signaling molecule which affects the development of discrete regions of tissues. Is likely to signal over only few cell diameters. This Evasterias troschelii (Mottled sea star) protein is Protein Wnt-6 (WNT-6).